The primary structure comprises 475 residues: MKNFQDKIKKLVPEMRRVNQIHFIGIGGAGMSGIAEVLLNEGYQISGSDIAEGPVTKRLAEAGAKVFIGHQAENVAGASVVVASSAIDDSNPEVRAAKEARIPVIQRAQMLAEIMRFRHGIAVAGTHGKTTTTAMISMIYTEAKLDPTFVNGGLVKSAGKNAHLGASRYLIAEADESDASFLHLQPMVSVVTNIEPDHMDTYGGDFEQMKATYVKFLRNLPFYGLAVMCADDETVIEIAPQVGRQVLTYGFSEKADYRIEDYQQTGFQGHYTVVCPNGERIDVLLNVPGKHNALNATAALAVAKEEGIANEAILAALADFQGAGRRFDQLGSFIRPNGKVMLVDDYGHHPTEVDVTIKAARSGWENKRVVMIFQPHRYSRTRDLFDDFVQVLSQVDALIMLEVYAAGEAPIVGADSKALCRSIRNLGKVDPILVSDTDQLGEVLDQIIQDGDLILAQGAGSVSRISRGLAESWKA.

Position 125 to 131 (125 to 131 (GTHGKTT)) interacts with ATP.

The protein belongs to the MurCDEF family.

Its subcellular location is the cytoplasm. The enzyme catalyses UDP-N-acetyl-alpha-D-muramate + L-alanine + ATP = UDP-N-acetyl-alpha-D-muramoyl-L-alanine + ADP + phosphate + H(+). It functions in the pathway cell wall biogenesis; peptidoglycan biosynthesis. Its function is as follows. Cell wall formation. This is UDP-N-acetylmuramate--L-alanine ligase from Actinobacillus pleuropneumoniae serotype 5b (strain L20).